The following is an 88-amino-acid chain: ATP synthase F(0) complex subunit f, mitochondrial (88 aa).

Ala-2 is subject to N-acetylalanine. The residue at position 3 (Ser-3) is a Phosphoserine. Lys-16 is modified (N6-acetyllysine). Residues 62-79 (MVLAAYVVFNYCRSYKEL) form a helical membrane-spanning segment.

This sequence belongs to the ATPase F chain family. In terms of assembly, component of the ATP synthase complex composed at least of ATP5F1A/subunit alpha, ATP5F1B/subunit beta, ATP5MC1/subunit c (homooctomer), MT-ATP6/subunit a, MT-ATP8/subunit 8, ATP5ME/subunit e, ATP5MF/subunit f, ATP5MG/subunit g, ATP5MK/subunit k, ATP5MJ/subunit j, ATP5F1C/subunit gamma, ATP5F1D/subunit delta, ATP5F1E/subunit epsilon, ATP5PF/subunit F6, ATP5PB/subunit b, ATP5PD/subunit d, ATP5PO/subunit OSCP. ATP synthase complex consists of a soluble F(1) head domain (subunits alpha(3) and beta(3)) - the catalytic core - and a membrane F(0) domain - the membrane proton channel (subunits c, a, 8, e, f, g, k and j). These two domains are linked by a central stalk (subunits gamma, delta, and epsilon) rotating inside the F1 region and a stationary peripheral stalk (subunits F6, b, d, and OSCP).

It is found in the mitochondrion. The protein localises to the mitochondrion inner membrane. Functionally, subunit f, of the mitochondrial membrane ATP synthase complex (F(1)F(0) ATP synthase or Complex V) that produces ATP from ADP in the presence of a proton gradient across the membrane which is generated by electron transport complexes of the respiratory chain. ATP synthase complex consist of a soluble F(1) head domain - the catalytic core - and a membrane F(1) domain - the membrane proton channel. These two domains are linked by a central stalk rotating inside the F(1) region and a stationary peripheral stalk. During catalysis, ATP synthesis in the catalytic domain of F(1) is coupled via a rotary mechanism of the central stalk subunits to proton translocation. In vivo, can only synthesize ATP although its ATP hydrolase activity can be activated artificially in vitro. Part of the complex F(0) domain. This chain is ATP synthase F(0) complex subunit f, mitochondrial, found in Sus scrofa (Pig).